A 654-amino-acid polypeptide reads, in one-letter code: Fructose-1,6-bisphosphatase class 3 (654 aa).

A disordered region spans residues 288–307 (NPAFKPKKRPDKHERLTQRE). Positions 298 to 307 (DKHERLTQRE) are enriched in basic and acidic residues.

It belongs to the FBPase class 3 family. It depends on Mn(2+) as a cofactor.

It catalyses the reaction beta-D-fructose 1,6-bisphosphate + H2O = beta-D-fructose 6-phosphate + phosphate. It functions in the pathway carbohydrate biosynthesis; gluconeogenesis. The chain is Fructose-1,6-bisphosphatase class 3 from Staphylococcus aureus (strain MSSA476).